We begin with the raw amino-acid sequence, 674 residues long: Translation factor GUF1, mitochondrial (674 aa).

A mitochondrion-targeting transit peptide spans 1-33; sequence MLRPWFCFRSCVSLLSNRRQYGFRYLATAEPSK. Residues 32–51 are disordered; that stretch reads SKSEKPAKPVKPAKPMSVQE. Positions 75-257 constitute a tr-type G domain; the sequence is QNYRNFSIVA…SIIKNIPAPV (183 aa). GTP contacts are provided by residues 84–91, 150–154, and 204–207; these read AHVDHGKS, DTPGH, and NKID.

The protein belongs to the TRAFAC class translation factor GTPase superfamily. Classic translation factor GTPase family. LepA subfamily.

The protein localises to the mitochondrion inner membrane. The catalysed reaction is GTP + H2O = GDP + phosphate + H(+). Promotes mitochondrial protein synthesis. May act as a fidelity factor of the translation reaction, by catalyzing a one-codon backward translocation of tRNAs on improperly translocated ribosomes. Binds to mitochondrial ribosomes in a GTP-dependent manner. In Lodderomyces elongisporus (strain ATCC 11503 / CBS 2605 / JCM 1781 / NBRC 1676 / NRRL YB-4239) (Yeast), this protein is Translation factor GUF1, mitochondrial.